Consider the following 129-residue polypeptide: Lysozyme C (129 aa).

Residues 1-129 enclose the C-type lysozyme domain; it reads KVYGRCELAA…VNAWTRGCRL (129 aa). Cystine bridges form between Cys-6–Cys-127, Cys-30–Cys-115, Cys-64–Cys-80, and Cys-76–Cys-94. Residues Glu-35 and Asp-52 contribute to the active site.

This sequence belongs to the glycosyl hydrolase 22 family. In terms of assembly, monomer.

It is found in the secreted. The catalysed reaction is Hydrolysis of (1-&gt;4)-beta-linkages between N-acetylmuramic acid and N-acetyl-D-glucosamine residues in a peptidoglycan and between N-acetyl-D-glucosamine residues in chitodextrins.. Functionally, lysozymes have primarily a bacteriolytic function; those in tissues and body fluids are associated with the monocyte-macrophage system and enhance the activity of immunoagents. This Chrysolophus amherstiae (Lady Amherst's pheasant) protein is Lysozyme C (LYZ).